We begin with the raw amino-acid sequence, 122 residues long: Large ribosomal subunit protein uL14 (122 aa).

The protein belongs to the universal ribosomal protein uL14 family. Part of the 50S ribosomal subunit. Forms a cluster with proteins L3 and L19. In the 70S ribosome, L14 and L19 interact and together make contacts with the 16S rRNA in bridges B5 and B8.

In terms of biological role, binds to 23S rRNA. Forms part of two intersubunit bridges in the 70S ribosome. The protein is Large ribosomal subunit protein uL14 of Maridesulfovibrio salexigens (strain ATCC 14822 / DSM 2638 / NCIMB 8403 / VKM B-1763) (Desulfovibrio salexigens).